Reading from the N-terminus, the 351-residue chain is uncharacterized protein (351 aa).

Histidine 23, histidine 25, lysine 151, histidine 184, histidine 212, and aspartate 270 together coordinate Zn(2+). Residue lysine 151 is modified to N6-carboxylysine.

The protein belongs to the metallo-dependent hydrolases superfamily. Phosphotriesterase family. It depends on Zn(2+) as a cofactor.

This is an uncharacterized protein from Mycoplasma pneumoniae (strain ATCC 29342 / M129 / Subtype 1) (Mycoplasmoides pneumoniae).